A 433-amino-acid polypeptide reads, in one-letter code: tRNA-queuosine alpha-mannosyltransferase (433 aa).

Positions 194-244 (PAAKSHIQTSSPSSYPDVEPPEKMLNVAGTNQSHEPTSVTPHQETASPLCG) are disordered. Residues 221-239 (AGTNQSHEPTSVTPHQETA) are compositionally biased toward polar residues.

The protein belongs to the glycosyltransferase group 1 family. Glycosyltransferase 4 subfamily.

The protein localises to the cytoplasm. It localises to the nucleus. The catalysed reaction is queuosine(34) in tRNA(Asp) + GDP-alpha-D-mannose = O-4''-alpha-D-mannosylqueuosine(34) in tRNA(Asp) + GDP + H(+). Glycosyltransferase that specifically catalyzes mannosylation of cytoplasmic tRNA(Asp) modified with queuosine at position 34 (queuosine(34)). Mannosylates the cyclopentene moiety of queuosine(34) in tRNA(Asp) to form mannosyl-queuosine(34). Mannosylation of queuosine(34) in tRNA(Asp) is required to slow-down elongation at cognate codons, GAC and GAU, thereby regulating protein translation. This chain is tRNA-queuosine alpha-mannosyltransferase (gtdc1), found in Danio rerio (Zebrafish).